The primary structure comprises 986 residues: E3 ubiquitin-protein ligase Arkadia (986 aa).

Residues K19, K28, K34, K47, K59, K73, K87, K96, and K110 each participate in a glycyl lysine isopeptide (Lys-Gly) (interchain with G-Cter in SUMO2) cross-link. Basic and acidic residues predominate over residues 66-89 (HLCDDSQKQEKDMNGNQQEQEKSL). Residues 66–106 (HLCDDSQKQEKDMNGNQQEQEKSLVVRKKRKSQQAGPSYVQ) are disordered. The segment at 120-191 (QHLGTPSDED…HKWPRTETES (72 aa)) is disordered. Low complexity predominate over residues 132–151 (SSFSDCLSSPSSSLHFGDSD). The span at 164-173 (RHSQTILNAK) shows a compositional bias: polar residues. K173 is covalently cross-linked (Glycyl lysine isopeptide (Lys-Gly) (interchain with G-Cter in SUMO2)). Over residues 174 to 184 (SRSHSARSHKW) the composition is skewed to basic residues. Residues K198 and K218 each participate in a glycyl lysine isopeptide (Lys-Gly) (interchain with G-Cter in SUMO2) cross-link. An interaction with AXIN1 region spans residues 241 to 404 (VLARRKYALL…VPTTSARMES (164 aa)). The disordered stretch occupies residues 248 to 277 (ALLPSSSSSSENDLSSESSSSSSTEGEEDL). The segment covering 252 to 271 (SSSSSSENDLSSESSSSSST) has biased composition (low complexity). Residues 300–304 (VVVIE) carry the SUMO interaction motif 1 (SIM) motif. Residues 325–331 (EVEIVTV) carry the SUMO interaction motif 2 (SIM) motif. The disordered stretch occupies residues 337–373 (SRSTLGHSRSHWSQGSSSHASRPQEPRNRSRISTVIQ). The span at 347 to 357 (HWSQGSSSHAS) shows a compositional bias: low complexity. Residues 382–386 (VVDLT) carry the SUMO interaction motif 3 (SIM) motif. Disordered regions lie at residues 389-471 (EDEP…ETGP), 506-561 (QQHG…SYHE), 610-646 (APSQPLSSIDGYGSSMVAQPQPQPPPQPSLSSCRHYM), 659-684 (HQASACPHSHGNPPPQTQPPPQVDYV), and 696-719 (ISSHATSHPVAPPPPTHLASTAAP). The span at 395-466 (VPTTSARMES…DSRRTTSSAV (72 aa)) shows a compositional bias: polar residues. A compositionally biased stretch (basic residues) spans 508 to 522 (HGHHFQHHHHHHHTP). Polar residues predominate over residues 551-561 (ANSSSGTSYHE). Positions 670–680 (NPPPQTQPPPQ) are enriched in pro residues. Residues 907–909 (YPH) are ubiquitin binding. Residues K915 and K919 each participate in a glycyl lysine isopeptide (Lys-Gly) (interchain with G-Cter in SUMO2) cross-link. Residues C934 and C937 each coordinate Zn(2+). The RING-type; atypical zinc finger occupies 934-975 (CTICLSILEEGEDVRRLPCMHLFHQVCVDQWLITNKKCPICR). Residues 949-953 (RLPCM) form a ubiquitin binding region. The Zn(2+) site is built by H957 and C960.

Belongs to the Arkadia family. Monomer. Interacts with SMAD6, SMAD7, AXIN1, AXIN2 and SKIL isoform SNON. Interacts with (phosphorylated) SMAD2 and SMAD3. Part of a complex containing RNF111, AXIN1 and SMAD7. Interacts (via SIM domains) with SUMO1 and SUMO2.

Its subcellular location is the nucleus. The protein localises to the cytoplasm. It is found in the PML body. The catalysed reaction is S-ubiquitinyl-[E2 ubiquitin-conjugating enzyme]-L-cysteine + [acceptor protein]-L-lysine = [E2 ubiquitin-conjugating enzyme]-L-cysteine + N(6)-ubiquitinyl-[acceptor protein]-L-lysine.. It functions in the pathway protein modification; protein ubiquitination. With respect to regulation, binds free ubiquitin non-covalently via its RING-type zinc finger. Ubiquitin-binding leads to enhance the E3 ubiquitin-protein ligase activity by stabilizing the ubiquitin-conjugating enzyme E2 (donor ubiquitin) in the 'closed' conformation and activating ubiquitin transfer. Functionally, E3 ubiquitin-protein ligase. Required for mesoderm patterning during embryonic development. Acts as an enhancer of the transcriptional responses of the SMAD2/SMAD3 effectors, which are activated downstream of BMP. Acts by mediating ubiquitination and degradation of SMAD inhibitors such as SMAD7, inducing their proteasomal degradation and thereby enhancing the transcriptional activity of TGF-beta and BMP. In addition to enhance transcription of SMAD2/SMAD3 effectors, also regulates their turnover by mediating their ubiquitination and subsequent degradation, coupling their activation with degradation, thereby ensuring that only effectors 'in use' are degraded. Activates SMAD3/SMAD4-dependent transcription by triggering signal-induced degradation of SNON isoform of SKIL. Associates with UBE2D2 as an E2 enzyme. Specifically binds polysumoylated chains via SUMO interaction motifs (SIMs) and mediates ubiquitination of sumoylated substrates. Catalyzes 'Lys-63'-linked ubiquitination of sumoylated XPC in response to UV irradiation, promoting nucleotide excision repair. Mediates ubiquitination and degradation of sumoylated PML. The regulation of the BMP-SMAD signaling is however independent of sumoylation and is not dependent of SUMO interaction motifs (SIMs). This chain is E3 ubiquitin-protein ligase Arkadia (RNF111), found in Pongo abelii (Sumatran orangutan).